The following is a 225-amino-acid chain: Phosphoglycolate phosphatase (225 aa).

The Nucleophile role is filled by Asp11. Residues Asp11, Asp13, and Asp174 each contribute to the Mg(2+) site.

Belongs to the HAD-like hydrolase superfamily. CbbY/CbbZ/Gph/YieH family. It depends on Mg(2+) as a cofactor.

It catalyses the reaction 2-phosphoglycolate + H2O = glycolate + phosphate. Its pathway is organic acid metabolism; glycolate biosynthesis; glycolate from 2-phosphoglycolate: step 1/1. Specifically catalyzes the dephosphorylation of 2-phosphoglycolate. Is involved in the dissimilation of the intracellular 2-phosphoglycolate formed during the DNA repair of 3'-phosphoglycolate ends, a major class of DNA lesions induced by oxidative stress. This Nitrosococcus oceani (strain ATCC 19707 / BCRC 17464 / JCM 30415 / NCIMB 11848 / C-107) protein is Phosphoglycolate phosphatase.